The chain runs to 171 residues: NADH-quinone oxidoreductase subunit I 1 (171 aa).

2 4Fe-4S ferredoxin-type domains span residues 39–71 (IVLTRDPDGQERCVACNLCAVVCPVGCIDLTKA) and 81–110 (EHFRINFARCIFCGFCEEACPTSAIQLTPD). Positions 51, 54, 57, 61, 90, 93, 96, and 100 each coordinate [4Fe-4S] cluster.

This sequence belongs to the complex I 23 kDa subunit family. In terms of assembly, NDH-1 is composed of 14 different subunits. Subunits NuoA, H, J, K, L, M, N constitute the membrane sector of the complex. It depends on [4Fe-4S] cluster as a cofactor.

The protein resides in the cell inner membrane. The enzyme catalyses a quinone + NADH + 5 H(+)(in) = a quinol + NAD(+) + 4 H(+)(out). Its function is as follows. NDH-1 shuttles electrons from NADH, via FMN and iron-sulfur (Fe-S) centers, to quinones in the respiratory chain. The immediate electron acceptor for the enzyme in this species is believed to be ubiquinone. Couples the redox reaction to proton translocation (for every two electrons transferred, four hydrogen ions are translocated across the cytoplasmic membrane), and thus conserves the redox energy in a proton gradient. The protein is NADH-quinone oxidoreductase subunit I 1 of Rhodopseudomonas palustris (strain BisB5).